The following is a 702-amino-acid chain: MADS-box MEF2 type transcription factor MIG1 (702 aa).

Residues 1–61 enclose the MADS-box domain; that stretch reads MGRRKIEIKA…KKLYEYSSGD (61 aa). 2 disordered regions span residues 73 to 608 and 658 to 702; these read GGAT…NIDT and PSFL…KVDS. Over residues 86–96 the composition is skewed to acidic residues; that stretch reads GGDDDDEEEGD. The span at 132–144 shows a compositional bias: pro residues; that stretch reads ASPPIPNGVPFPP. The span at 145–155 shows a compositional bias: low complexity; the sequence is HGHGVPRGHTP. The segment covering 180–195 has biased composition (polar residues); it reads GSPQVNGFGFGQQQSM. A compositionally biased stretch (pro residues) spans 201 to 241; that stretch reads TTMPPHMPPQMAPGPPFPYPQHPQHPPHPPHPPHPPHPQQP. Composition is skewed to low complexity over residues 273-284, 326-343, and 350-371; these read PMGMQRHSVSPP, ESPQ…QQPE, and EQQQ…QSEP. Residues 456–465 are compositionally biased toward polar residues; the sequence is VDESTSNASE. 2 stretches are compositionally biased toward low complexity: residues 487–512 and 530–553; these read RASI…SLRA and DGSG…DATS. The segment covering 554-567 has biased composition (polar residues); it reads QSTRQNDSHSSTNM. The segment covering 587 to 600 has biased composition (pro residues); the sequence is PPNPFAPKRPPQHP. Positions 693–702 are enriched in basic and acidic residues; that stretch reads NEPKRVKVDS.

It belongs to the MEF2 family. As to quaternary structure, interacts with MAPK MPS1.

It is found in the nucleus. Transcription factor acting downstream of the MPS1 MAP kinase (MAPK) cascade during conidiation and plant infection. Required for overcoming plant defense responses and the differentiation of secondary infectious hyphae in live plant cells. The sequence is that of MADS-box MEF2 type transcription factor MIG1 from Pyricularia oryzae (strain 70-15 / ATCC MYA-4617 / FGSC 8958) (Rice blast fungus).